The following is a 430-amino-acid chain: tRNA(Ile)-lysidine synthase (430 aa).

27–32 contributes to the ATP binding site; it reads SGGSDS.

The protein belongs to the tRNA(Ile)-lysidine synthase family.

Its subcellular location is the cytoplasm. It catalyses the reaction cytidine(34) in tRNA(Ile2) + L-lysine + ATP = lysidine(34) in tRNA(Ile2) + AMP + diphosphate + H(+). Functionally, ligates lysine onto the cytidine present at position 34 of the AUA codon-specific tRNA(Ile) that contains the anticodon CAU, in an ATP-dependent manner. Cytidine is converted to lysidine, thus changing the amino acid specificity of the tRNA from methionine to isoleucine. The sequence is that of tRNA(Ile)-lysidine synthase from Rickettsia typhi (strain ATCC VR-144 / Wilmington).